A 266-amino-acid chain; its full sequence is Beta-lactamase OXA-10 (266 aa).

Residues 1 to 19 (MKTFAAYVIIACLSSTALA) form the signal peptide. Cys44 and Cys51 form a disulfide bridge. Ser67 functions as the Acyl-ester intermediate in the catalytic mechanism. Lys70 carries the N6-carboxylysine modification. A beta-lactam contacts are provided by Ser115, Thr206, Phe208, and Arg250.

It belongs to the class-D beta-lactamase family. In terms of assembly, dimer.

It is found in the periplasm. It catalyses the reaction a beta-lactam + H2O = a substituted beta-amino acid. Activated, with respect to most beta-lactam substrates, in the presence of 0.05 M sodium bicarbonate. In terms of biological role, class D beta-lactamase which confers resistance to the beta-lactam antibiotics, including penicillin, carbenicillin and oxacillin, and also some cephalosporins. Confers weak resistance to some carbapenems, in E.coli strain C600Z1. Acts via hydrolysis of the beta-lactam ring. Has penicillin- and cephalosporin-hydrolyzing activities. The polypeptide is Beta-lactamase OXA-10 (Pseudomonas aeruginosa).